Consider the following 630-residue polypeptide: Probable potassium transport system protein Kup 1 (630 aa).

The next 12 membrane-spanning stretches (helical) occupy residues 15–35 (LLAMALGSVGVVYGDIGTSPL), 58–78 (LISLMIWALTIIVTIKYVLFL), 104–124 (TAILFFMGIAGAALFIGDAMI), 142–162 (PALSDYVVPIAVVILLFLFAV), 173–193 (FFGPITLVWFLVMGAVGFMHI), 208–228 (AVAFLFNEGYVGIVVLGAVFL), 252–272 (WFTVVFPALTLNYLGQGAFVL), 290–310 (ALLPAVILATAATIIASQAVI), 342–362 (IYLPNVNTLLMFGVMALVFIF), 368–388 (LATAYGISVTGAMVVTTVLAF), 399–419 (AWWAAGVLLPLFALELVFLGA), and 424–444 (IHDGGYVPILIAATFIVIMWT).

It belongs to the HAK/KUP transporter (TC 2.A.72) family.

The protein localises to the cell inner membrane. The catalysed reaction is K(+)(in) + H(+)(in) = K(+)(out) + H(+)(out). Transport of potassium into the cell. Likely operates as a K(+):H(+) symporter. The sequence is that of Probable potassium transport system protein Kup 1 from Sinorhizobium medicae (strain WSM419) (Ensifer medicae).